The following is a 246-amino-acid chain: 1-(5-phosphoribosyl)-5-[(5-phosphoribosylamino)methylideneamino] imidazole-4-carboxamide isomerase (246 aa).

Asp-7 serves as the catalytic Proton acceptor. Catalysis depends on Asp-130, which acts as the Proton donor.

It belongs to the HisA/HisF family.

The protein resides in the cytoplasm. The catalysed reaction is 1-(5-phospho-beta-D-ribosyl)-5-[(5-phospho-beta-D-ribosylamino)methylideneamino]imidazole-4-carboxamide = 5-[(5-phospho-1-deoxy-D-ribulos-1-ylimino)methylamino]-1-(5-phospho-beta-D-ribosyl)imidazole-4-carboxamide. It functions in the pathway amino-acid biosynthesis; L-histidine biosynthesis; L-histidine from 5-phospho-alpha-D-ribose 1-diphosphate: step 4/9. The polypeptide is 1-(5-phosphoribosyl)-5-[(5-phosphoribosylamino)methylideneamino] imidazole-4-carboxamide isomerase (Blochmanniella pennsylvanica (strain BPEN)).